Here is a 703-residue protein sequence, read N- to C-terminus: MKQIMIFLTSFMLLAMTGQTALAKDVQVSGSLLGKSSQEQAKQQVLTSELITLYGSKDSAELTYQIPAGASSGNQQLVIEYEASNLLISPSSLTVVIDDEPVKTLKLDGDSKRKTVKLNLNKSQSAQGYHNVSLKFYGVMKEGVCVRQDTSGNWIKIYPDSRLTLADSSEAKGTSLDHYPYPFAQSGNTAEETAIVIPDNPSSAEIEAAVKTEGYLKTVDSSVSIAYVTESELKKIDKPTIVIGVDKHWNGKVKKLLKQAGLQAKGENLLLAERVLKAEGKQQPVLFAQAASEDALTKKISVMTDQTYTGQLSGDTLSISKLQQTEKKESDKLTLENFGAGDITIGADKTSSAHYFYPASAVLDENQSAKLSLKLKKSETIQASTAENESASQAAELKVMINGQPHSVRLDELGKEDKNGFYHVTVKVDPKLLQKNRYIDIQFVTTGLKENNPCNTTDEEKWVFIDKNSTLSYAIKGMSPSADFQEWPLPYAGNQDQTTLIVLPDTVSQSKLEELSLVTESFGNEAQHSYTVKKSSDVTANDAKGRNLIFIGGINQFSLLKEKSSDLLVPQEKNGSFDVSSFEMLNETTKQVVFTQASVWDSRYTMAVFAPSKGDGTAVTKEIISYLNSNDESATVLNETNSQQVFTNHQQLKSETNSSDAEQPTQDHSQKWMYIGVLALIMVVAAVFIWIAVRRKKRKTDTE.

An N-terminal signal peptide occupies residues 1–23 (MKQIMIFLTSFMLLAMTGQTALA). A helical transmembrane segment spans residues 673 to 693 (MYIGVLALIMVVAAVFIWIAV).

The protein resides in the cell membrane. This is an uncharacterized protein from Bacillus subtilis (strain 168).